We begin with the raw amino-acid sequence, 319 residues long: Taste receptor type 2 member 14 (319 aa).

Residues 1–7 (MDGVIKS) lie on the Extracellular side of the membrane. Residues 8 to 28 (IFTFILILEFIIGNLGNSFIV) form a helical membrane-spanning segment. At 29–55 (LVNCIDWVKRRKISLVDQLLIALAISR) the chain is on the cytoplasmic side. The helical transmembrane segment at 56–76 (ISLVWSIFGSWCVSVVFPALF) threads the bilayer. Residues 77–87 (ATEKLLRMLTN) lie on the Extracellular side of the membrane. Positions 86 and 89 each coordinate cholesterol. Residues 88 to 108 (IWTVTNHFSVWLATILGTFYF) traverse the membrane as a helical segment. Residues 109–129 (LKIANFSNSIFLYLKWRVKKV) are Cytoplasmic-facing. A helical membrane pass occupies residues 130–150 (VLVLLLVTLVLLFLNILLINI). Residues 151–184 (HINASINGYRGNMTCSSASCNFIRFSSAIALTST) lie on the Extracellular side of the membrane. Asparagine 153 and asparagine 162 each carry an N-linked (GlcNAc...) asparagine glycan. Cholesterol is bound at residue alanine 180. A helical membrane pass occupies residues 185 to 205 (VFILIPFTLSLATFLLLSFSL). Residues 206 to 232 (WKHRKKMQHTVKGYRDVSTKAHRGVMQ) lie on the Cytoplasmic side of the membrane. Residues 233 to 253 (TVITFLLLYAVFFLTFFVSIW) traverse the membrane as a helical segment. Over 254 to 261 (ISERLKEN) the chain is Extracellular. Residues 262 to 282 (QIIILSEMMGLAYPSGHSCVL) traverse the membrane as a helical segment. Isoleucine 265 and glutamate 268 together coordinate cholesterol. Residues 283–317 (ILGNKKLRQASLSVLWWLRYRFKDGELSGHKEFRE) lie on the Cytoplasmic side of the membrane.

It belongs to the G-protein coupled receptor T2R family. Core component of the TAS2R14-GNAI1 complex, consisting of TAS2R14, GNAI1, GNB1 and GNG2; within the complex interacts with GNAI1. Core component of the TAS2R14-GNAT3 complex, consisting of TAS2R14, GNAT3, GNB1 and GNG2; within the complex interacts with GNAT3. Core component of the TAS2R14-GNAS2 complex, consisting of TAS2R14, GNAS2, GNB1 and GNG2; within the complex interacts with GNAS2.

Its subcellular location is the membrane. It carries out the reaction Ca(2+)(in) = Ca(2+)(out). It catalyses the reaction 3',5'-cyclic AMP(in) = 3',5'-cyclic AMP(out). Basal activity is enhanced by binding to bitter tastants, such as flufenamic acid and aristolochic acid. Regulated by cholesterol in a concentration-dependent manner. Functionally, gustducin-linked G-protein coupled receptor that plays a role in the perception of bitterness. The activity of this receptor stimulates GNAT3, activating the gustducin G-protein pathway. Likely plays a role in sensing the chemical composition of the gastrointestinal content and other extra-oral tissues via the inhibitory G-protein pathways. This is Taste receptor type 2 member 14 (TAS2R14) from Papio hamadryas (Hamadryas baboon).